A 399-amino-acid polypeptide reads, in one-letter code: Acetate kinase (399 aa).

N9 contributes to the Mg(2+) binding site. K16 lines the ATP pocket. Substrate is bound at residue R90. D147 functions as the Proton donor/acceptor in the catalytic mechanism. Residues 207–211, 282–284, and 330–334 contribute to the ATP site; these read HIGNG, DLR, and GVGEN. E384 lines the Mg(2+) pocket.

It belongs to the acetokinase family. Homodimer. Mg(2+) serves as cofactor. The cofactor is Mn(2+).

The protein resides in the cytoplasm. The catalysed reaction is acetate + ATP = acetyl phosphate + ADP. The protein operates within metabolic intermediate biosynthesis; acetyl-CoA biosynthesis; acetyl-CoA from acetate: step 1/2. Catalyzes the formation of acetyl phosphate from acetate and ATP. Can also catalyze the reverse reaction. This chain is Acetate kinase, found in Staphylococcus saprophyticus subsp. saprophyticus (strain ATCC 15305 / DSM 20229 / NCIMB 8711 / NCTC 7292 / S-41).